Here is a 184-residue protein sequence, read N- to C-terminus: MQQLAKDILASLETKMTQAQEVMLKNFCDIRTGTANPNILDKITVNYYGAPTFLKTLASISVSEGNQLNIKPYDSTLIPNIKKVLLASNLGITPQTDGLVVRLVFPKPTEERRKALMKEVEQLAEKTKVAIRNVRREGNDKIKKVELTKDLETFYLNQIQTLTDKNIKLIEKHTTTKNTELLKA.

This sequence belongs to the RRF family.

The protein resides in the cytoplasm. Its function is as follows. Responsible for the release of ribosomes from messenger RNA at the termination of protein biosynthesis. May increase the efficiency of translation by recycling ribosomes from one round of translation to another. In Onion yellows phytoplasma (strain OY-M), this protein is Ribosome-recycling factor.